The sequence spans 188 residues: NADH-quinone oxidoreductase subunit B (188 aa).

The [4Fe-4S] cluster site is built by C67, C68, C132, and C162.

This sequence belongs to the complex I 20 kDa subunit family. NDH-1 is composed of 14 different subunits. Subunits NuoB, C, D, E, F, and G constitute the peripheral sector of the complex. [4Fe-4S] cluster serves as cofactor.

The protein resides in the cell inner membrane. The catalysed reaction is a quinone + NADH + 5 H(+)(in) = a quinol + NAD(+) + 4 H(+)(out). Its function is as follows. NDH-1 shuttles electrons from NADH, via FMN and iron-sulfur (Fe-S) centers, to quinones in the respiratory chain. Couples the redox reaction to proton translocation (for every two electrons transferred, four hydrogen ions are translocated across the cytoplasmic membrane), and thus conserves the redox energy in a proton gradient. The protein is NADH-quinone oxidoreductase subunit B of Maricaulis maris (strain MCS10) (Caulobacter maris).